Consider the following 184-residue polypeptide: Large ribosomal subunit protein uL6 (184 aa).

This sequence belongs to the universal ribosomal protein uL6 family. As to quaternary structure, part of the 50S ribosomal subunit.

This protein binds to the 23S rRNA, and is important in its secondary structure. It is located near the subunit interface in the base of the L7/L12 stalk, and near the tRNA binding site of the peptidyltransferase center. In Aster yellows witches'-broom phytoplasma (strain AYWB), this protein is Large ribosomal subunit protein uL6.